The chain runs to 449 residues: Chromosomal replication initiator protein DnaA (449 aa).

The segment at Met-1–Lys-73 is domain I, interacts with DnaA modulators. Positions Lys-73–Ser-110 are domain II. The tract at residues Thr-111–Ser-327 is domain III, AAA+ region. Residues Gly-155, Gly-157, Lys-158, and Thr-159 each contribute to the ATP site. Residues Ser-328–Asn-449 are domain IV, binds dsDNA.

Belongs to the DnaA family. As to quaternary structure, oligomerizes as a right-handed, spiral filament on DNA at oriC.

It localises to the cytoplasm. Its function is as follows. Plays an essential role in the initiation and regulation of chromosomal replication. ATP-DnaA binds to the origin of replication (oriC) to initiate formation of the DNA replication initiation complex once per cell cycle. Binds the DnaA box (a 9 base pair repeat at the origin) and separates the double-stranded (ds)DNA. Forms a right-handed helical filament on oriC DNA; dsDNA binds to the exterior of the filament while single-stranded (ss)DNA is stabiized in the filament's interior. The ATP-DnaA-oriC complex binds and stabilizes one strand of the AT-rich DNA unwinding element (DUE), permitting loading of DNA polymerase. After initiation quickly degrades to an ADP-DnaA complex that is not apt for DNA replication. Binds acidic phospholipids. The sequence is that of Chromosomal replication initiator protein DnaA from Clostridium beijerinckii (strain ATCC 51743 / NCIMB 8052) (Clostridium acetobutylicum).